The primary structure comprises 105 residues: Small ribosomal subunit protein eS24 (105 aa).

This sequence belongs to the eukaryotic ribosomal protein eS24 family.

The protein is Small ribosomal subunit protein eS24 of Ignicoccus hospitalis (strain KIN4/I / DSM 18386 / JCM 14125).